Consider the following 468-residue polypeptide: Cyclin-dependent kinase 14 (468 aa).

Phosphoserine is present on residues Ser24, Ser77, and Ser94. A disordered region spans residues Phe102–Ala131. Phosphoserine is present on Ser133. A Protein kinase domain is found at Tyr134–Phe418. Residues Leu140 to Val148 and Lys163 each bind ATP. The active-site Proton acceptor is the Asp255. Positions Glu448 to His468 are disordered. The segment covering Lys455 to His468 has biased composition (polar residues).

Belongs to the protein kinase superfamily. CMGC Ser/Thr protein kinase family. CDC2/CDKX subfamily. Found in a complex with LRP6, CCNY and CAPRIN2 during G2/M stage; CAPRIN2 functions as a scaffold for the complex by binding to CCNY via its N terminus and to CDK14 via its C terminus. Interacts with CCNY; CCNY mediates its recruitment to the plasma membrane and promotes phosphorylation of LRP6. Interacts with CCDN3 and CDKN1A. Interacts with SEPT8. Interacts with 14-3-3 proteina YWHAB, YWHAE, YWHAH and YWHAQ.

The protein localises to the cell membrane. It is found in the cytoplasm. The protein resides in the nucleus. The enzyme catalyses L-seryl-[protein] + ATP = O-phospho-L-seryl-[protein] + ADP + H(+). It catalyses the reaction L-threonyl-[protein] + ATP = O-phospho-L-threonyl-[protein] + ADP + H(+). With respect to regulation, serine/threonine-protein kinase activity is promoted by associated cyclins CCDN3 and CCNY and repressed by CDKN1A. Functionally, serine/threonine-protein kinase involved in the control of the eukaryotic cell cycle, whose activity is controlled by an associated cyclin. Acts as a cell-cycle regulator of Wnt signaling pathway during G2/M phase by mediating the phosphorylation of LRP6 at 'Ser-1490', leading to the activation of the Wnt signaling pathway. Acts as a regulator of cell cycle progression and cell proliferation via its interaction with CCDN3. Phosphorylates RB1 in vitro, however the relevance of such result remains to be confirmed in vivo. May also play a role in meiosis, neuron differentiation and may indirectly act as a negative regulator of insulin-responsive glucose transport. In Oryctolagus cuniculus (Rabbit), this protein is Cyclin-dependent kinase 14 (CDK14).